The chain runs to 305 residues: GMP synthase [glutamine-hydrolyzing] subunit B (305 aa).

The GMPS ATP-PPase domain occupies 2-184 (VDANAFIDEA…LPLPEEISER (183 aa)). 29 to 35 (SGGVDSS) provides a ligand contact to ATP.

In terms of assembly, heterodimer composed of a glutamine amidotransferase subunit (A) and a GMP-binding subunit (B).

The catalysed reaction is XMP + L-glutamine + ATP + H2O = GMP + L-glutamate + AMP + diphosphate + 2 H(+). The protein operates within purine metabolism; GMP biosynthesis; GMP from XMP (L-Gln route): step 1/1. Its function is as follows. Catalyzes the synthesis of GMP from XMP. In Methanocella arvoryzae (strain DSM 22066 / NBRC 105507 / MRE50), this protein is GMP synthase [glutamine-hydrolyzing] subunit B.